A 163-amino-acid polypeptide reads, in one-letter code: MSDKAAGEVKNGNGATAEPSLNILAQYVKDLSFESPGAPLSLRPREKAPSININVNVNANPLSETDFDVVLTLEAKAVDGKDVLFNTELVYGGVFRIQGIPQEHMLPLLFIECPRLLFPFARQIIADATRNGGYPPLMIDPIDFAQMFQQRMAEEQAKSAVKS.

Belongs to the SecB family. As to quaternary structure, homotetramer, a dimer of dimers. One homotetramer interacts with 1 SecA dimer.

It localises to the cytoplasm. One of the proteins required for the normal export of preproteins out of the cell cytoplasm. It is a molecular chaperone that binds to a subset of precursor proteins, maintaining them in a translocation-competent state. It also specifically binds to its receptor SecA. This chain is Protein-export protein SecB, found in Brucella anthropi (strain ATCC 49188 / DSM 6882 / CCUG 24695 / JCM 21032 / LMG 3331 / NBRC 15819 / NCTC 12168 / Alc 37) (Ochrobactrum anthropi).